We begin with the raw amino-acid sequence, 777 residues long: Glucocorticoid receptor (777 aa).

Residues 1 to 14 are compositionally biased toward basic and acidic residues; that stretch reads MDSKESLTPGKEEN. The disordered stretch occupies residues 1–21; it reads MDSKESLTPGKEENPSSVLTQ. The modulating stretch occupies residues 1 to 420; that stretch reads MDSKESLTPG…TATTGPPPKL (420 aa). At Thr-8 the chain carries Phosphothreonine. Arg-23 carries the post-translational modification Omega-N-methylarginine. Phosphoserine is present on residues Ser-45, Ser-113, Ser-134, and Ser-141. Residues 130–182 form a disordered region; that stretch reads NRSTSVPENPKSSASSSVSAAPKEKEFPKTHSDVSSEQQNLKGQTGTNGGNVK. A compositionally biased stretch (low complexity) spans 134–150; that stretch reads SVPENPKSSASSSVSAA. Residues 151–163 show a composition bias toward basic and acidic residues; the sequence is PKEKEFPKTHSDV. Residues 164–174 show a composition bias toward polar residues; sequence SSEQQNLKGQT. Phosphoserine occurs at positions 203, 211, and 226. Lys-258 is covalently cross-linked (Glycyl lysine isopeptide (Lys-Gly) (interchain with G-Cter in SUMO2)). Position 267 is a phosphoserine (Ser-267). Residues Lys-277 and Lys-293 each participate in a glycyl lysine isopeptide (Lys-Gly) (interchain with G-Cter in SUMO); alternate cross-link. Glycyl lysine isopeptide (Lys-Gly) (interchain with G-Cter in SUMO2); alternate cross-links involve residues Lys-277 and Lys-293. Positions 394–414 are enriched in low complexity; sequence SSPSMRPDVSSPPSSSSTATT. Positions 394-415 are disordered; sequence SSPSMRPDVSSPPSSSSTATTG. Position 404 is a phosphoserine (Ser-404). Residue Lys-419 forms a Glycyl lysine isopeptide (Lys-Gly) (interchain with G-Cter in ubiquitin) linkage. 2 NR C4-type zinc fingers span residues 421–441 and 457–481; these read CLVC…CGSC and CAGR…YRKC. The nuclear receptor DNA-binding region spans 421 to 486; it reads CLVCSDEASG…RYRKCLQAGM (66 aa). N6-acetyllysine occurs at positions 480, 492, 494, and 495. The interval 485-777 is interaction with CLOCK; the sequence is GMNLEARKTK…NIKKLLFHQK (293 aa). The segment at 487–523 is hinge; it reads NLEARKTKKKIKGIQQATTGVSQETSENPANKTIVPA. The NR LBD domain occupies 524 to 758; the sequence is TLPQLTPTLV…FPEMLAEIIT (235 aa). The interaction with CRY1 stretch occupies residues 532–697; it reads LVSLLEVIEP…EIRMTYIKEL (166 aa). Lys-703 participates in a covalent cross-link: Glycyl lysine isopeptide (Lys-Gly) (interchain with G-Cter in SUMO).

The protein belongs to the nuclear hormone receptor family. NR3 subfamily. As to quaternary structure, heteromultimeric cytoplasmic complex with HSP90AA1, HSPA1A/HSPA1B, and FKBP5 or another immunophilin such as PPID, STIP1, or the immunophilin homolog PPP5C. Upon ligand binding FKBP5 dissociates from the complex and FKBP4 takes its place, thereby linking the complex to dynein and mediating transport to the nucleus, where the complex dissociates. Probably forms a complex composed of chaperones HSP90 and HSP70, co-chaperones CDC37, PPP5C, TSC1 and client protein TSC2, CDK4, AKT, RAF1 and NR3C1; this complex does not contain co-chaperones STIP1/HOP and PTGES3/p23. Directly interacts with UNC45A. Binds to DNA as a homodimer, and as heterodimer with NR3C2 or the retinoid X receptor. Binds STAT5A and STAT5B homodimers and heterodimers. Interacts with NRIP1, POU2F1, POU2F2 and TRIM28. Interacts with several coactivator complexes, including the SMARCA4 complex, CREBBP/EP300, TADA2L (Ada complex) and p160 coactivators such as NCOA2 and NCOA6. Interaction with BAG1 inhibits transactivation. Interacts with HEXIM1 and TGFB1I1. Interacts with NCOA1. Interacts with NCOA3, SMARCA4, SMARCC1, SMARCD1, and SMARCE1. Interacts with CLOCK, CRY1 and CRY2 in a ligand-dependent fashion. Interacts with CIART. Interacts with RWDD3. Interacts with UBE2I/UBC9 and this interaction is enhanced in the presence of RWDD3. Interacts with GRIP1. Interacts with NR4A3 (via nuclear receptor DNA-binding domain), represses transcription activity of NR4A3 on the POMC promoter Nur response element (NurRE). Directly interacts with PNRC2 to attract and form a complex with UPF1 and DCP1A; the interaction leads to rapid mRNA degradation. Interacts with GSK3B. Interacts with FNIP1 and FNIP2. Interacts (via C-terminus) with HNRNPU (via C-terminus). Interacts with MCM3AP. Interacts (via domain NR LBD) with HSP90AA1 and HSP90AB1. In the absence of hormonal ligand, interacts with TACC1. Interacts (via NR LBD domain) with ZNF764 (via KRAB domain); the interaction regulates transcription factor activity of NR3C1 by directing its actions toward certain biologic pathways. Post-translationally, acetylation by CLOCK reduces its binding to glucocorticoid response elements and its transcriptional activity. Increased proteasome-mediated degradation in response to glucocorticoids. In terms of processing, phosphorylated in the absence of hormone; becomes hyperphosphorylated in the presence of glucocorticoid. The Ser-203, Ser-226 and Ser-404-phosphorylated forms are mainly cytoplasmic, and the Ser-211-phosphorylated form is nuclear. Phosphorylation at Ser-211 increases transcriptional activity. Phosphorylation at Ser-203, Ser-226 and Ser-404 decreases signaling capacity. Phosphorylation at Ser-404 may protect from glucocorticoid-induced apoptosis. Phosphorylation at Ser-203 and Ser-211 is not required in regulation of chromosome segregation. May be dephosphorylated by PPP5C, attenuates NR3C1 action. Post-translationally, ubiquitinated by UBR5, leading to its degradation: UBR5 specifically recognizes and binds ligand-bound NR3C1 when it is not associated with coactivators (NCOAs). In presence of NCOAs, the UBR5-degron is not accessible, preventing its ubiquitination and degradation. Sumoylation at Lys-277 and Lys-293 negatively regulates its transcriptional activity. Sumoylation at Lys-703 positively regulates its transcriptional activity in the presence of RWDD3. Sumoylation at Lys-277 and Lys-293 is dispensable whereas sumoylation at Lys-703 is critical for the stimulatory effect of RWDD3 on its transcriptional activity. Heat shock increases sumoylation in a RWDD3-dependent manner. Within the infant and adult hippocampal formation, highest expression observed in the DG granule cell layer with moderate levels in the DG hilus, the CA2-CA4 pyramidal cell layer and the proximal part of the CA1 pyramidal cell layer. Moderate to high expression levels found in the presubiculum and in its' superficial layers. Weak but specific expression detected throughout the entire corticle mantle. In the amygdala, moderate levels were detected in the lateral, central and medial nuclei. Moderate expression levels were present in the PVNh alongside the third ventricle.

It localises to the cytoplasm. It is found in the nucleus. Its subcellular location is the mitochondrion. The protein resides in the cytoskeleton. The protein localises to the spindle. It localises to the microtubule organizing center. It is found in the centrosome. Its subcellular location is the chromosome. The protein resides in the nucleoplasm. In terms of biological role, receptor for glucocorticoids (GC). Has a dual mode of action: as a transcription factor that binds to glucocorticoid response elements (GRE), both for nuclear and mitochondrial DNA, and as a modulator of other transcription factors. Affects inflammatory responses, cellular proliferation and differentiation in target tissues. Involved in chromatin remodeling. Plays a role in rapid mRNA degradation by binding to the 5' UTR of target mRNAs and interacting with PNRC2 in a ligand-dependent manner which recruits the RNA helicase UPF1 and the mRNA-decapping enzyme DCP1A, leading to RNA decay. Could act as a coactivator for STAT5-dependent transcription upon growth hormone (GH) stimulation and could reveal an essential role of hepatic GR in the control of body growth. Mediates glucocorticoid-induced apoptosis. Promotes accurate chromosome segregation during mitosis. May act as a tumor suppressor. May play a negative role in adipogenesis through the regulation of lipolytic and antilipogenic gene expression. The sequence is that of Glucocorticoid receptor (NR3C1) from Callithrix jacchus (White-tufted-ear marmoset).